The primary structure comprises 76 residues: Bacteriocin uberolysin (76 aa).

The propeptide occupies 1-6 (MDILLE). Residues 7–76 (LAGYTGIASG…RNLKAQAVIW (70 aa)) constitute a cross-link (cyclopeptide (Leu-Trp)).

It belongs to the bacteriocin class V family.

The protein localises to the secreted. Functionally, cyclopeptide antibiotic with bacteriolytic activity against most streptococci (except S.rattus and S.mutans), Listeria spp., enterococci and staphylococci. This is Bacteriocin uberolysin (ublA) from Streptococcus uberis.